Reading from the N-terminus, the 423-residue chain is Transcription factor bHLH14 (423 aa).

The interval 192-243 (GKTTKHTNQTGSYPKPAVSDHSKSGNQQFGSERKRRRKLETTRVAAATKEKH) is disordered. Positions 245-294 (PAVLSHVEAEKQRREKLNHRFYALRAIVPKVSRMDKASLLSDAVSYIESL) constitute a bHLH domain. Residues 312–343 (ETDKLDNSSSNTSPSSVEYQVNQKPSKSNRGS) are disordered. The span at 318 to 327 (NSSSNTSPSS) shows a compositional bias: low complexity. A compositionally biased stretch (polar residues) spans 328-342 (VEYQVNQKPSKSNRG).

Homodimer.

The protein localises to the nucleus. The sequence is that of Transcription factor bHLH14 (BHLH14) from Arabidopsis thaliana (Mouse-ear cress).